The following is a 325-amino-acid chain: mRNA decay activator protein ZFP36 (325 aa).

Residues 1–15 are necessary for nuclear export; that stretch reads MDLAAIYKSLLSLSP. The necessary and sufficient for the association with mRNA decay enzymes and mRNA decay activation stretch occupies residues 1–98; sequence MDLAAIYKSL…PTSPTATPTT (98 aa). Necessary for localization of ARE-containing mRNAs to processing bodies (PBs) regions lie at residues 1-172 and 98-325; these read MDLA…DLAA and TSSR…SVSE. Residues 15 to 48 are compositionally biased toward low complexity; it reads PELPSDLGETESSTSWASSGPWSLSSSDSSLPEA. The tract at residues 15–101 is disordered; sequence PELPSDLGET…PTATPTTSSR (87 aa). A Phosphoserine; by MAPKAPK2 modification is found at Ser-58. Ser-64 carries the phosphoserine modification. The stretch at 69-73 is one P-P-P-P-G repeat; that stretch reads PPPPG. Positions 75–101 are enriched in low complexity; it reads APLAPRPSSELSPSPTSPTATPTTSSR. 2 positions are modified to phosphoserine: Ser-86 and Ser-88. Position 90 is a phosphothreonine (Thr-90). Ser-91 bears the Phosphoserine mark. The segment at 93-166 is necessary for nuclear localization; sequence TATPTTSSRY…GSRCHFIHNP (74 aa). The segment at 95–171 is necessary for RNA-binding; that stretch reads TPTTSSRYKT…FIHNPSEDLA (77 aa). 2 consecutive C3H1-type zinc fingers follow at residues 101 to 129 and 139 to 167; these read RYKTELCRTFSESGRCRYGAKCQFAHGLG and KYKTELCHKFYLQGRCPYGSRCHFIHNPS. The tract at residues 101–192 is necessary for interaction with PABPN1; sequence RYKTELCRTF…ISFSGLPSGR (92 aa). Ser-167 is subject to Phosphoserine. The necessary for mRNA decay activation stretch occupies residues 172 to 325; the sequence is APGHPHVLRQ…PIFNRISVSE (154 aa). A Phosphoserine; by MAPKAPK2 modification is found at Ser-184. Disordered regions lie at residues 185 to 248 and 260 to 325; these read FSGL…TPAC and VWGP…SVSE. The residue at position 195 (Ser-195) is a Phosphoserine. The P-P-P-P-G repeat unit spans residues 196–200; sequence PPPAS. Positions 204 to 214 are enriched in low complexity; that stretch reads PSVPSWSFSPS. Ser-216 is subject to Phosphoserine. One copy of the P-P-P-P-G repeat lies at 217–222; sequence PPPPPG. Residue Ser-227 is modified to Phosphoserine; by MAPK1; in vitro. 3 positions are modified to phosphoserine: Ser-275, Ser-295, and Ser-322. Positions 285 to 295 are enriched in low complexity; the sequence is SSGSSLGGSDS. The segment at 311-325 is interaction with CNOT1; the sequence is APRRLPIFNRISVSE.

As to quaternary structure, associates with cytoplasmic CCR4-NOT and PAN2-PAN3 deadenylase complexes to trigger ARE-containing mRNA deadenylation and decay processes. Part of a mRNA decay activation complex at least composed of poly(A)-specific exoribonucleases CNOT6, EXOSC2 and XRN1 and mRNA-decapping enzymes DCP1A and DCP2. Associates with the RNA exosome complex. Interacts (via phosphorylated form) with 14-3-3 proteins; these interactions promote exclusion of ZFP36 from cytoplasmic stress granules in response to arsenite treatment in a MAPKAPK2-dependent manner and does not prevent CCR4-NOT deadenylase complex recruitment or ZFP36-induced ARE-containing mRNA deadenylation and decay processes. Interacts with 14-3-3 proteins; these interactions occur in response to rapamycin in an Akt-dependent manner. Interacts with AGO2 and AGO4. Interacts (via C-terminus) with CNOT1; this interaction occurs in a RNA-independent manner and induces mRNA deadenylation. Interacts (via N-terminus) with CNOT6. Interacts with CNOT6L. Interacts (via C-terminus) with CNOT7; this interaction occurs in a RNA-independent manner, induces mRNA deadenylation and is inhibited in a phosphorylation MAPKAPK2-dependent manner. Interacts (via unphosphorylated form) with CNOT8; this interaction occurs in a RNA-independent manner and is inhibited in a phosphorylation MAPKAPK2-dependent manner. Interacts with DCP1A. Interacts (via N-terminus) with DCP2. Interacts with EDC3. Interacts (via N-terminus) with EXOSC2. Interacts with heat shock 70 kDa proteins. Interacts with KHSRP; this interaction increases upon cytokine-induced treatment. Interacts with MAP3K4; this interaction enhances the association with SH3KBP1/CIN85. Interacts with MAPKAPK2; this interaction occurs upon skeletal muscle satellite cell activation. Interacts with NCL. Interacts with NUP214; this interaction increases upon lipopolysaccharide (LPS) stimulation. Interacts with PABPC1; this interaction occurs in a RNA-dependent manner. Interacts (via hypophosphorylated form) with PABPN1 (via RRM domain and C-terminal arginine-rich region); this interaction occurs in the nucleus in a RNA-independent manner, decreases in presence of single-stranded poly(A) RNA-oligomer and in a p38 MAPK-dependent-manner and inhibits nuclear poly(A) tail synthesis. Interacts with PAN2. Interacts (via C3H1-type zinc finger domains) with PKM. Interacts (via C3H1-type zinc finger domains) with nuclear RNA poly(A) polymerase. Interacts with PPP2CA; this interaction occurs in LPS-stimulated cells and induces ZFP36 dephosphorylation, and hence may promote ARE-containing mRNAs decay. Interacts (via C-terminus) with PRR5L (via C-terminus); this interaction may accelerate ZFP36-mediated mRNA decay during stress. Interacts (via C-terminus) with SFN; this interaction occurs in a phosphorylation-dependent manner. Interacts (via extreme C-terminal region) with SH3KBP1/CIN85 (via SH3 domains); this interaction enhances MAP3K4-induced phosphorylation of ZFP36 at Ser-64 and Ser-91 and does not alter neither ZFP36 binding to ARE-containing transcripts nor TNF-alpha mRNA decay. Interacts with XRN1. Interacts (via C-terminus and Ser-184 phosphorylated form) with YWHAB; this interaction occurs in a p38/MAPKAPK2-dependent manner, increases cytoplasmic localization of ZFP36 and protects ZFP36 from Ser-184 dephosphorylation by serine/threonine phosphatase 2A, and hence may be crucial for stabilizing ARE-containing mRNAs. Interacts (via phosphorylated form) with YWHAE. Interacts (via C-terminus) with YWHAG; this interaction occurs in a phosphorylation-dependent manner. Interacts with YWHAH; this interaction occurs in a phosphorylation-dependent manner. Interacts with YWHAQ; this interaction occurs in a phosphorylation-dependent manner. Interacts with (via C-terminus) YWHAZ; this interaction occurs in a phosphorylation-dependent manner. Does not interact with SH3KBP1. Interacts (via P-P-P-P-G repeats) with GIGYF2; the interaction is direct. In terms of processing, phosphorylated. Phosphorylation at serine and/or threonine residues occurs in a p38 MAPK- and MAPKAPK2-dependent manner. Phosphorylated by MAPKAPK2 at Ser-58 and Ser-184; phosphorylation increases its stability and cytoplasmic localization, promotes binding to 14-3-3 adapter proteins and inhibits the recruitment of cytoplasmic CCR4-NOT and PAN2-PAN3 deadenylase complexes to the mRNA decay machinery, thereby inhibiting ZFP36-induced ARE-containing mRNA deadenylation and decay processes. Phosphorylation by MAPKAPK2 does not impair ARE-containing RNA-binding. Phosphorylated in a MAPKAPK2- and p38 MAPK-dependent manner upon skeletal muscle satellite cell activation; this phosphorylation inhibits ZFP36-mediated mRNA decay activity, and hence stabilizes MYOD1 mRNA. Phosphorylated by MAPK1 upon mitogen stimulation. Phosphorylated at Ser-64 and Ser-91; these phosphorylations increase in a SH3KBP1-dependent manner. Phosphorylated at serine and threonine residues in a pyruvate kinase PKM- and p38 MAPK-dependent manner. Phosphorylation at Ser-58 may participate in the PKM-mediated degradation of ZFP36 in a p38 MAPK-dependent manner. Dephosphorylated by serine/threonine phosphatase 2A at Ser-184. Post-translationally, ubiquitinated; pyruvate kinase (PKM)-dependent ubiquitination leads to proteasomal degradation through a p38 MAPK signaling pathway.

It localises to the nucleus. The protein resides in the cytoplasm. Its subcellular location is the cytoplasmic granule. The protein localises to the P-body. Zinc-finger RNA-binding protein that destabilizes numerous cytoplasmic AU-rich element (ARE)-containing mRNA transcripts by promoting their poly(A) tail removal or deadenylation, and hence provide a mechanism for attenuating protein synthesis. Acts as an 3'-untranslated region (UTR) ARE mRNA-binding adapter protein to communicate signaling events to the mRNA decay machinery. Recruits deadenylase CNOT7 (and probably the CCR4-NOT complex) via association with CNOT1, and hence promotes ARE-mediated mRNA deadenylation. Also functions by recruiting components of the cytoplasmic RNA decay machinery to the bound ARE-containing mRNAs. Self regulates by destabilizing its own mRNA. Binds to 3'-UTR ARE of numerous mRNAs. Also binds to ARE of its own mRNA. Plays a role in anti-inflammatory responses; suppresses tumor necrosis factor (TNF)-alpha production by stimulating ARE-mediated TNF-alpha mRNA decay and several other inflammatory ARE-containing mRNAs in interferon (IFN)- and/or lipopolysaccharide (LPS)-induced macrophages. Also plays a role in the regulation of dendritic cell maturation at the post-transcriptional level, and hence operates as part of a negative feedback loop to limit the inflammatory response. Promotes ARE-mediated mRNA decay of hypoxia-inducible factor HIF1A mRNA during the response of endothelial cells to hypoxia. Positively regulates early adipogenesis of preadipocytes by promoting ARE-mediated mRNA decay of immediate early genes (IEGs). Negatively regulates hematopoietic/erythroid cell differentiation by promoting ARE-mediated mRNA decay of the transcription factor STAT5B mRNA. Plays a role in maintaining skeletal muscle satellite cell quiescence by promoting ARE-mediated mRNA decay of the myogenic determination factor MYOD1 mRNA. Also associates with and regulates the expression of non-ARE-containing target mRNAs at the post-transcriptional level, such as MHC class I mRNAs. Participates in association with argonaute RISC catalytic components in the ARE-mediated mRNA decay mechanism; assists microRNA (miRNA) targeting ARE-containing mRNAs. May also play a role in the regulation of cytoplasmic mRNA decapping; enhances decapping of ARE-containing RNAs, in vitro. Involved in the delivery of target ARE-mRNAs to processing bodies (PBs). In addition to its cytosolic mRNA-decay function, affects nuclear pre-mRNA processing. Negatively regulates nuclear poly(A)-binding protein PABPN1-stimulated polyadenylation activity on ARE-containing pre-mRNA during LPS-stimulated macrophages. Also involved in the regulation of stress granule (SG) and P-body (PB) formation and fusion. Plays a role in the regulation of keratinocyte proliferation, differentiation and apoptosis. Plays a role as a tumor suppressor by inhibiting cell proliferation in breast cancer cells. The polypeptide is mRNA decay activator protein ZFP36 (Ovis aries (Sheep)).